A 141-amino-acid polypeptide reads, in one-letter code: Methylglyoxal synthase (141 aa).

Positions 1–141 (MNIALIAHDK…PKLQKNKSDK (141 aa)) constitute an MGS-like domain. Substrate-binding positions include histidine 8, lysine 12, and 34 to 37 (TGTT). The active-site Proton donor/acceptor is the aspartate 60. A substrate-binding site is contributed by histidine 87.

The protein belongs to the methylglyoxal synthase family.

It carries out the reaction dihydroxyacetone phosphate = methylglyoxal + phosphate. Functionally, catalyzes the formation of methylglyoxal from dihydroxyacetone phosphate. This chain is Methylglyoxal synthase, found in Caldicellulosiruptor bescii (strain ATCC BAA-1888 / DSM 6725 / KCTC 15123 / Z-1320) (Anaerocellum thermophilum).